The sequence spans 157 residues: Small ribosomal subunit protein uS7 (157 aa).

Belongs to the universal ribosomal protein uS7 family. As to quaternary structure, part of the 30S ribosomal subunit. Contacts proteins S9 and S11.

Functionally, one of the primary rRNA binding proteins, it binds directly to 16S rRNA where it nucleates assembly of the head domain of the 30S subunit. Is located at the subunit interface close to the decoding center, probably blocks exit of the E-site tRNA. The chain is Small ribosomal subunit protein uS7 from Psychrobacter sp. (strain PRwf-1).